Reading from the N-terminus, the 363-residue chain is Cobalt-precorrin-5B C(1)-methyltransferase (363 aa).

The protein belongs to the CbiD family.

It catalyses the reaction Co-precorrin-5B + S-adenosyl-L-methionine = Co-precorrin-6A + S-adenosyl-L-homocysteine. Its pathway is cofactor biosynthesis; adenosylcobalamin biosynthesis; cob(II)yrinate a,c-diamide from sirohydrochlorin (anaerobic route): step 6/10. In terms of biological role, catalyzes the methylation of C-1 in cobalt-precorrin-5B to form cobalt-precorrin-6A. The chain is Cobalt-precorrin-5B C(1)-methyltransferase from Burkholderia pseudomallei (strain K96243).